Reading from the N-terminus, the 180-residue chain is Protein C2-DOMAIN ABA-RELATED 10 (180 aa).

The region spanning 1 to 105 (MDQKPLGLLT…EALKMGMELL (105 aa)) is the C2 domain. Residues arginine 22, aspartate 23, aspartate 28, aspartate 74, tryptophan 75, aspartate 76, and aspartate 82 each coordinate Ca(2+).

The protein belongs to the plant CAR protein family. As to quaternary structure, binds to PYR/PYL/RCAR abscisic acid intracellular receptors in an ABA-independent manner, both at the plasma membrane and in the nucleus.

It is found in the cell membrane. Its subcellular location is the nucleus. Functionally, stimulates the GTPase/ATPase activities of Obg-like ATPases. Mediates the transient calcium-dependent interaction of PYR/PYL/RCAR abscisic acid (ABA) receptors with the plasma membrane and thus regulates ABA sensitivity. This Arabidopsis thaliana (Mouse-ear cress) protein is Protein C2-DOMAIN ABA-RELATED 10.